Here is a 194-residue protein sequence, read N- to C-terminus: Peptidyl-tRNA hydrolase (194 aa).

Tyrosine 17 is a binding site for tRNA. Histidine 22 (proton acceptor) is an active-site residue. The tRNA site is built by phenylalanine 68, asparagine 70, and asparagine 116.

It belongs to the PTH family. In terms of assembly, monomer.

Its subcellular location is the cytoplasm. The catalysed reaction is an N-acyl-L-alpha-aminoacyl-tRNA + H2O = an N-acyl-L-amino acid + a tRNA + H(+). Its function is as follows. Hydrolyzes ribosome-free peptidyl-tRNAs (with 1 or more amino acids incorporated), which drop off the ribosome during protein synthesis, or as a result of ribosome stalling. Catalyzes the release of premature peptidyl moieties from peptidyl-tRNA molecules trapped in stalled 50S ribosomal subunits, and thus maintains levels of free tRNAs and 50S ribosomes. This Histophilus somni (strain 129Pt) (Haemophilus somnus) protein is Peptidyl-tRNA hydrolase.